Reading from the N-terminus, the 291-residue chain is Oxidative stress-responsive serine-rich protein 1 (291 aa).

The interval 48-174 is disordered; sequence EDAKPKSACA…SSDAPQVSQA (127 aa). Positions 65-83 are enriched in basic residues; that stretch reads STRKSSRGAVRTQRRRRSK. Residues 132-142 show a composition bias toward polar residues; sequence ECSSSLDTNHT. Residues Thr-142 and Thr-232 each carry the phosphothreonine modification.

The sequence is that of Oxidative stress-responsive serine-rich protein 1 (OSER1) from Bos taurus (Bovine).